We begin with the raw amino-acid sequence, 329 residues long: Apolipoprotein E (329 aa).

Residues 1-18 form the signal peptide; it reads MKVLWAALVVALLAGCWA. 8 repeat units span residues 92-113, 114-135, 136-157, 158-179, 180-201, 202-223, 224-245, and 246-267. Residues 92–267 are 8 X 22 AA approximate tandem repeats; it reads TLMEETMKEI…HLDEVREQME (176 aa). At methionine 155 the chain carries Methionine sulfoxide. The residue at position 159 (serine 159) is a Phosphoserine. The segment at 170-180 is LDL and other lipoprotein receptors binding; sequence HMRKLRKRVLR. Heparin is bound at residue 174–177; it reads LRKR. Positions 222–302 are lipid-binding and lipoprotein association; the sequence is HAKVDALATQ…GWFEPLVEDM (81 aa). 241–248 serves as a coordination point for heparin; sequence GQQLRGRL. The interval 278 to 329 is homooligomerization; the sequence is NQMRQQAEPFQARLKGWFEPLVEDMQRQWAVLVEKVQAAVGTSPTTPPVETK. The tract at residues 290 to 302 is specificity for association with VLDL; it reads RLKGWFEPLVEDM.

Belongs to the apolipoprotein A1/A4/E family. In terms of assembly, homotetramer. May interact with ABCA1; functionally associated with ABCA1 in the biogenesis of HDLs. May interact with APP/A4 amyloid-beta peptide; the interaction is extremely stable in vitro but its physiological significance is unclear. May interact with MAPT. May interact with MAP2. In the cerebrospinal fluid, interacts with secreted SORL1. Interacts with PMEL; this allows the loading of PMEL luminal fragment on ILVs to induce fibril nucleation. Post-translationally, APOE exists as multiple glycosylated and sialylated glycoforms within cells and in plasma. The extent of glycosylation and sialylation are tissue and context specific. Glycated in plasma VLDL. In terms of processing, phosphorylated by FAM20C in the extracellular medium.

The protein resides in the secreted. The protein localises to the extracellular space. It localises to the extracellular matrix. Its subcellular location is the extracellular vesicle. It is found in the endosome. The protein resides in the multivesicular body. Functionally, APOE is an apolipoprotein, a protein associating with lipid particles, that mainly functions in lipoprotein-mediated lipid transport between organs via the plasma and interstitial fluids. APOE is a core component of plasma lipoproteins and is involved in their production, conversion and clearance. Apolipoproteins are amphipathic molecules that interact both with lipids of the lipoprotein particle core and the aqueous environment of the plasma. As such, APOE associates with chylomicrons, chylomicron remnants, very low density lipoproteins (VLDL) and intermediate density lipoproteins (IDL) but shows a preferential binding to high-density lipoproteins (HDL). It also binds a wide range of cellular receptors including the LDL receptor/LDLR, the LDL receptor-related proteins LRP1, LRP2 and LRP8 and the very low-density lipoprotein receptor/VLDLR that mediate the cellular uptake of the APOE-containing lipoprotein particles. Finally, APOE also has a heparin-binding activity and binds heparan-sulfate proteoglycans on the surface of cells, a property that supports the capture and the receptor-mediated uptake of APOE-containing lipoproteins by cells. A main function of APOE is to mediate lipoprotein clearance through the uptake of chylomicrons, VLDLs, and HDLs by hepatocytes. APOE is also involved in the biosynthesis by the liver of VLDLs as well as their uptake by peripheral tissues ensuring the delivery of triglycerides and energy storage in muscle, heart and adipose tissues. By participating in the lipoprotein-mediated distribution of lipids among tissues, APOE plays a critical role in plasma and tissues lipid homeostasis. APOE is also involved in two steps of reverse cholesterol transport, the HDLs-mediated transport of cholesterol from peripheral tissues to the liver, and thereby plays an important role in cholesterol homeostasis. First, it is functionally associated with ABCA1 in the biogenesis of HDLs in tissues. Second, it is enriched in circulating HDLs and mediates their uptake by hepatocytes. APOE also plays an important role in lipid transport in the central nervous system, regulating neuron survival and sprouting. The sequence is that of Apolipoprotein E (APOE) from Arctocephalus gazella (Antarctic fur seal).